Consider the following 350-residue polypeptide: S-adenosylmethionine:tRNA ribosyltransferase-isomerase (350 aa).

It belongs to the QueA family. Monomer.

Its subcellular location is the cytoplasm. It carries out the reaction 7-aminomethyl-7-carbaguanosine(34) in tRNA + S-adenosyl-L-methionine = epoxyqueuosine(34) in tRNA + adenine + L-methionine + 2 H(+). It participates in tRNA modification; tRNA-queuosine biosynthesis. Transfers and isomerizes the ribose moiety from AdoMet to the 7-aminomethyl group of 7-deazaguanine (preQ1-tRNA) to give epoxyqueuosine (oQ-tRNA). This is S-adenosylmethionine:tRNA ribosyltransferase-isomerase from Bacillus cereus (strain Q1).